Consider the following 105-residue polypeptide: Cuticle protein AMP1A (105 aa).

The segment at 1–21 is disordered; sequence DRDAQTLTDERSDQGDGNFRY. The region spanning 16 to 81 is the Chitin-binding type R&amp;R domain; that stretch reads DGNFRYEFET…PSSDLLPVGP (66 aa).

Arthrodial membrane.

This chain is Cuticle protein AMP1A, found in Homarus americanus (American lobster).